We begin with the raw amino-acid sequence, 447 residues long: Glycylpeptide N-tetradecanoyltransferase (447 aa).

Tetradecanoyl-CoA is bound by residues 38–41, 171–173, and 179–183; these read YKFW, LCV, and SKRLA. Leu-447 serves as the catalytic Proton acceptor; via carboxylate.

The protein belongs to the NMT family. In terms of assembly, monomer.

The protein localises to the cytoplasm. It catalyses the reaction N-terminal glycyl-[protein] + tetradecanoyl-CoA = N-tetradecanoylglycyl-[protein] + CoA + H(+). In terms of biological role, adds a myristoyl group to the N-terminal glycine residue of certain cellular proteins. This is Glycylpeptide N-tetradecanoyltransferase (NMT1) from Kluyveromyces lactis (strain ATCC 8585 / CBS 2359 / DSM 70799 / NBRC 1267 / NRRL Y-1140 / WM37) (Yeast).